Here is a 1040-residue protein sequence, read N- to C-terminus: MQVLPPSATGGPSRLFILRPVATTLLMVAILLAGIIGYRFLPVSALPEVDYPTIQVVTLYPGASPDVVTSAITAPLERQFGQMSGLKQMASQSAGGASVVTLQFQLTLPLDVAEQEVQAAINAATNLLPDDLPNPPVYSKVNPADPPIMTLAVTSSALPMTQVEDMVETRVAQRISQVTGVGLVTLSGGQRPAVRVKLNAQALASLGIDSETVRTAITSANVNSAKGSFDGPERAVTLSANDQMKSADEYRNLIIAYKNGAPVRLGDVATVEQGAENAWLGAWANKQPAIVMNVQRQPGANIITTAETIQKLLPQLTESLPKSVQVKVLTDRTTNISASVNDTQFELMLAIALVVMIIYLFLRNIPATIIPAVAVPLSLVGTFAVMVFLDFSINNLTLMALTIATGFVVDDAIVVIENISRYIEKGEKPLAAALKGAGEIGFTIISLTFSLIAVLIPLLFMGDIVGRLFREFAVTLAVAILISAVVSLTLTPMMCARMLSHESLRKQNRFSRASERVINRVIARYGQLLKRVLNHPWLTLGVALGTLALTVLLWIFIPKGFFPVQDNGIIQGTLQAPQSVSFASMAERQRAVADVILKDPAVESLTSFVGVDGTNPSLNSARLQINLKPLDDRDDRVQTVIARLQEAASRVPGATLYLQPIQDLTIDTQVSRTQYQFTLQANSLEALSTWVPKLIARLQTLPQLADVSSDWQDNGLVAYVNVDRASASRLGISMSDVDNALYNAFGQRLISTIYTQANQYRVVLEHNTTATPGLAALDGIRLASSDGGMVPLSAIAKVEQRFGPLTINHLDQFPSTTISFNVPDGYSLGDAVDAITQAEADLAFPAEITTQFQGSTLAFQAALGSTLWLILASVVAMYIVLGVLYESFIHPITILSTLPTAGVGALLALLIAGAELDVIAIIGIILLIGIVKKNAIMMIDFALAAEREQGMTPREAIYQACLLRFRPILMTTLAALLGALPLMLSTGVGAELRRPLGIGMVGGLLVSQVLTLFTTPVIYLLFDRLGHAVRRRLPAREEEA.

Transmembrane regions (helical) follow at residues Phe16–Ile36, Leu347–Ala367, Ile369–Leu389, Leu396–Ile416, Ile440–Phe460, Phe472–Pro492, Trp537–Ile557, Leu863–Val883, Phe888–Ala908, Ile911–Val931, Ile968–Val988, and Ile998–Ile1018.

This sequence belongs to the resistance-nodulation-cell division (RND) (TC 2.A.6) family. MdtB subfamily. In terms of assembly, part of a tripartite efflux system composed of MdtA, MdtB and MdtC. MdtB forms a heteromultimer with MdtC.

It is found in the cell inner membrane. The chain is Multidrug resistance protein MdtB from Cronobacter sakazakii (strain ATCC BAA-894) (Enterobacter sakazakii).